Consider the following 262-residue polypeptide: Octopine permease ATP-binding protein P (262 aa).

The ABC transporter domain occupies 9–254 (VKLTGIRKNF…PRTERFRQFL (246 aa)). 41-48 (GSSGSGKS) is a binding site for ATP.

It belongs to the ABC transporter superfamily.

The protein resides in the cell inner membrane. In terms of biological role, component of the octopine active transport system probably consisting of four subunits: Q, M, P and T. The polypeptide is Octopine permease ATP-binding protein P (occP) (Rhizobium meliloti (Ensifer meliloti)).